Consider the following 200-residue polypeptide: Proteasome subunit beta 2 (200 aa).

A propeptide spans 1 to 10 (MSDQLELMTG) (removed in mature form; by autocatalysis). Thr-11 serves as the catalytic Nucleophile.

This sequence belongs to the peptidase T1B family. The 20S proteasome core is composed of 14 alpha and 14 beta subunits that assemble into four stacked heptameric rings, resulting in a barrel-shaped structure. The two inner rings, each composed of seven catalytic beta subunits, are sandwiched by two outer rings, each composed of seven alpha subunits. The catalytic chamber with the active sites is on the inside of the barrel. Has a gated structure, the ends of the cylinder being occluded by the N-termini of the alpha-subunits. Is capped at one or both ends by the proteasome regulatory ATPase, PAN.

It is found in the cytoplasm. The catalysed reaction is Cleavage of peptide bonds with very broad specificity.. Its activity is regulated as follows. The formation of the proteasomal ATPase PAN-20S proteasome complex, via the docking of the C-termini of PAN into the intersubunit pockets in the alpha-rings, triggers opening of the gate for substrate entry. Interconversion between the open-gate and close-gate conformations leads to a dynamic regulation of the 20S proteasome proteolysis activity. Functionally, component of the proteasome core, a large protease complex with broad specificity involved in protein degradation. The polypeptide is Proteasome subunit beta 2 (Caldivirga maquilingensis (strain ATCC 700844 / DSM 13496 / JCM 10307 / IC-167)).